The following is a 218-amino-acid chain: Fucoxanthin-chlorophyll a-c binding protein, chloroplastic (218 aa).

Residues 1–36 (MFYSAAVAALMVGSASAFLAPAQFNSVAKSSGALSM) constitute a chloroplast transit peptide.

It belongs to the fucoxanthin chlorophyll protein family. As to quaternary structure, the LHC complex of chromophytic algae is composed of fucoxanthin, chlorophyll A and C bound non-covalently by fucoxanthin chlorophyll proteins (FCPs). The ratio of pigments in this LHC is; fucoxanthin: chlorophyll C: chlorophyll A; (0.6-1): (0.1-0.3): (1).

It is found in the plastid. Its subcellular location is the chloroplast thylakoid membrane. Functionally, the light-harvesting complex (LHC) functions as a light receptor, it captures and delivers excitation energy to photosystems with which it is closely associated. Energy is transferred from the carotenoid and chlorophyll C (or B) to chlorophyll A and the photosynthetic reaction centers where it is used to synthesize ATP and reducing power. This Chattonella marina var. antiqua (Red tide flagellate) protein is Fucoxanthin-chlorophyll a-c binding protein, chloroplastic.